We begin with the raw amino-acid sequence, 463 residues long: Nucleobindin-1 (463 aa).

An N-terminal signal peptide occupies residues 1–26 (MPPSGPQGTLLLLPLLLLLLLRAVLA). Position 86 is a phosphoserine (S86). Phosphothreonine is present on T148. A coiled-coil region spans residues 150-218 (EARDLELLIQ…QQRRHREHPK (69 aa)). A DNA-binding region spans residues 172-218 (HHEEFKRYEMLKEHERRRYLESLGEEQRKEAERRLEEQQRRHREHPK). A compositionally biased stretch (basic and acidic residues) spans 193–210 (SLGEEQRKEAERRLEEQQ). The segment at 193–221 (SLGEEQRKEAERRLEEQQRRHREHPKVNV) is disordered. Positions 228-321 (LKEVWEELDG…VTLGEFLAST (94 aa)) are binds to GNAI2 and GNAI3. EF-hand domains follow at residues 240–275 (PNRF…ELEK) and 292–327 (ERLR…KEFG). Residues D253, N255, D257, E264, D305, N307, D309, and E316 each coordinate Ca(2+). The GBA signature appears at 303-333 (NVDTNQDRLVTLGEFLASTQRKEFGDTGEGW). Residues 341–409 (AYTEEELRRF…KQQQQQQQQQ (69 aa)) are a coiled coil. The segment at 368-463 (LSQETEALGR…LPEVEVPQHL (96 aa)) is disordered. The residue at position 369 (S369) is a Phosphoserine. Over residues 439–463 (DQKEVDTSEKKLLERLPEVEVPQHL) the composition is skewed to basic and acidic residues.

It belongs to the nucleobindin family. In terms of assembly, interacts (via GBA motif) with guanine nucleotide-binding protein G(i) alpha subunits GNAI1, GNAI2 and GNAI3 with higher affinity for GNAI1 and GNAI3 than for GNAI2. Preferentially interacts with inactive rather than active GNAI3. Interaction with GNAI3 is inhibited when NUCB1 binds calcium, probably due to a conformational change which renders the GBA motif inaccessible.

Its subcellular location is the golgi apparatus. It is found in the cis-Golgi network membrane. It localises to the cytoplasm. The protein localises to the secreted. Major calcium-binding protein of the Golgi which may have a role in calcium homeostasis. Acts as a non-receptor guanine nucleotide exchange factor which binds to and activates alpha subunits of guanine nucleotide-binding proteins (G proteins). This Pongo abelii (Sumatran orangutan) protein is Nucleobindin-1 (NUCB1).